We begin with the raw amino-acid sequence, 280 residues long: Mesaconyl-C(4)-CoA hydratase (280 aa).

The protein belongs to the HTD2 family. Homodimer.

It carries out the reaction (3S)-citramalyl-CoA = 3-methylfumaryl-CoA + H2O. Its activity is regulated as follows. Inhibited by 3-methylfumaryl-CoA concentrations above 0.3 mM. Functionally, involved in the glyoxylate assimilation cycle used to regenerate acetyl-CoA and produce pyruvate as universal precursor for biosynthesis. Catalyzes the hydration of 3-methylfumaryl-CoA (mesaconyl-C4-CoA) to (3S)-citramalyl-CoA. The polypeptide is Mesaconyl-C(4)-CoA hydratase (meh) (Chloroflexus aurantiacus (strain ATCC 29366 / DSM 635 / J-10-fl)).